We begin with the raw amino-acid sequence, 275 residues long: 3-deoxy-manno-octulosonate cytidylyltransferase (275 aa).

Belongs to the KdsB family.

The protein localises to the cytoplasm. The enzyme catalyses 3-deoxy-alpha-D-manno-oct-2-ulosonate + CTP = CMP-3-deoxy-beta-D-manno-octulosonate + diphosphate. Its pathway is nucleotide-sugar biosynthesis; CMP-3-deoxy-D-manno-octulosonate biosynthesis; CMP-3-deoxy-D-manno-octulosonate from 3-deoxy-D-manno-octulosonate and CTP: step 1/1. It participates in bacterial outer membrane biogenesis; lipopolysaccharide biosynthesis. Activates KDO (a required 8-carbon sugar) for incorporation into bacterial lipopolysaccharide in Gram-negative bacteria. This chain is 3-deoxy-manno-octulosonate cytidylyltransferase, found in Psychrobacter sp. (strain PRwf-1).